The primary structure comprises 121 residues: Large ribosomal subunit protein uL14 (121 aa).

This sequence belongs to the universal ribosomal protein uL14 family. Part of the 50S ribosomal subunit. Forms a cluster with proteins L3 and L19. In the 70S ribosome, L14 and L19 interact and together make contacts with the 16S rRNA in bridges B5 and B8.

Functionally, binds to 23S rRNA. Forms part of two intersubunit bridges in the 70S ribosome. This chain is Large ribosomal subunit protein uL14, found in Mycoplasmopsis synoviae (strain 53) (Mycoplasma synoviae).